We begin with the raw amino-acid sequence, 388 residues long: DNA primase small subunit PriS (388 aa).

Catalysis depends on residues aspartate 100, aspartate 102, and aspartate 288.

It belongs to the eukaryotic-type primase small subunit family. In terms of assembly, heterodimer of a small subunit (PriS) and a large subunit (PriL). It depends on Mg(2+) as a cofactor. The cofactor is Mn(2+).

Catalytic subunit of DNA primase, an RNA polymerase that catalyzes the synthesis of short RNA molecules used as primers for DNA polymerase during DNA replication. The small subunit contains the primase catalytic core and has DNA synthesis activity on its own. Binding to the large subunit stabilizes and modulates the activity, increasing the rate of DNA synthesis while decreasing the length of the DNA fragments, and conferring RNA synthesis capability. The DNA polymerase activity may enable DNA primase to also catalyze primer extension after primer synthesis. May also play a role in DNA repair. The polypeptide is DNA primase small subunit PriS (Methanospirillum hungatei JF-1 (strain ATCC 27890 / DSM 864 / NBRC 100397 / JF-1)).